Reading from the N-terminus, the 134-residue chain is Profilin-3 (134 aa).

Cysteine 13 and cysteine 118 form a disulfide bridge. The Involved in PIP2 interaction motif lies at 84–100 (AVIRGKKGSGGITIKKT). Residue threonine 114 is modified to Phosphothreonine.

The protein belongs to the profilin family. Occurs in many kinds of cells as a complex with monomeric actin in a 1:1 ratio. Phosphorylated by MAP kinases.

It localises to the cytoplasm. Its subcellular location is the cytoskeleton. Binds to actin and affects the structure of the cytoskeleton. At high concentrations, profilin prevents the polymerization of actin, whereas it enhances it at low concentrations. This chain is Profilin-3, found in Olea europaea (Common olive).